The following is a 193-amino-acid chain: MITLNTEEKIFIYSWLKNILSHELTEQQLQQYQQGVFTPLFDFLSEQDLAEQINTVRNSLMQLSNLPLAHLELAADFAQLFLLNGENSALPYASAYLSEKELNQHIAFIDHLLLKYQLKFDHSLREPSDHLAVYLELLITLEKSGQKEKSFNFIQHYLLAWLIPFNKKVQKIKTETSFYQAITEILITLLNKT.

The protein belongs to the TorD/DmsD family. TorD subfamily.

It is found in the cytoplasm. In terms of biological role, involved in the biogenesis of TorA. Acts on TorA before the insertion of the molybdenum cofactor and, as a result, probably favors a conformation of the apoenzyme that is competent for acquiring the cofactor. This chain is Chaperone protein TorD, found in Histophilus somni (strain 129Pt) (Haemophilus somnus).